The primary structure comprises 310 residues: Upstream stimulatory factor 1 (310 aa).

Polar residues predominate over residues 1 to 17 (MKGQQKTAETEEGTVQI). 2 disordered regions span residues 1-26 (MKGQ…ATGE) and 171-209 (QGGS…EVER). Over residues 190–209 (EAPRTTRDEKRRAQHNEVER) the composition is skewed to basic and acidic residues. In terms of domain architecture, bHLH spans 199 to 254 (KRRAQHNEVERRRRDKINNWIVQLSKIIPDCSMESTKSGQSKGGILSKACDYIQEL). The interval 271-292 (LQLDNDVLRQQVEDLKNKNLLL) is leucine-zipper. K306 is covalently cross-linked (Glycyl lysine isopeptide (Lys-Gly) (interchain with G-Cter in SUMO2)).

As to quaternary structure, efficient DNA binding requires dimerization with another bHLH protein. Binds DNA as a homodimer or a heterodimer (USF1/USF2). Interacts with varicella-zoster virus IE62 protein.

It localises to the nucleus. Transcription factor that binds to a symmetrical DNA sequence (E-boxes) (5'-CACGTG-3') that is found in a variety of viral and cellular promoters. The protein is Upstream stimulatory factor 1 (USF1) of Homo sapiens (Human).